Reading from the N-terminus, the 179-residue chain is Bifunctional protein PyrR (179 aa).

The PRPP-binding motif lies at 100-112 (VILVDDVLFTGRT).

The protein belongs to the purine/pyrimidine phosphoribosyltransferase family. PyrR subfamily.

The catalysed reaction is UMP + diphosphate = 5-phospho-alpha-D-ribose 1-diphosphate + uracil. In terms of biological role, regulates the transcription of the pyrimidine nucleotide (pyr) operon in response to exogenous pyrimidines. Also displays a weak uracil phosphoribosyltransferase activity which is not physiologically significant. This Haemophilus influenzae (strain 86-028NP) protein is Bifunctional protein PyrR.